Consider the following 24-residue polypeptide: Xenoposin precursor fragment B2 (24 aa).

As to expression, expressed by the skin glands.

It localises to the secreted. Has antimicrobial activity against Gram-negative bacterium E.coli ATCC 25922 (MIC=100 uM), Gram-positive bacterium S.auerus ATCC 25923 (MIC=25 uM). The sequence is that of Xenoposin precursor fragment B2 from Xenopus borealis (Kenyan clawed frog).